A 160-amino-acid polypeptide reads, in one-letter code: SsrA-binding protein (160 aa).

The disordered stretch occupies residues 132–160 (KEFDKRDTVRERDSNRELQRTMRNKGKEE).

Belongs to the SmpB family.

It localises to the cytoplasm. Required for rescue of stalled ribosomes mediated by trans-translation. Binds to transfer-messenger RNA (tmRNA), required for stable association of tmRNA with ribosomes. tmRNA and SmpB together mimic tRNA shape, replacing the anticodon stem-loop with SmpB. tmRNA is encoded by the ssrA gene; the 2 termini fold to resemble tRNA(Ala) and it encodes a 'tag peptide', a short internal open reading frame. During trans-translation Ala-aminoacylated tmRNA acts like a tRNA, entering the A-site of stalled ribosomes, displacing the stalled mRNA. The ribosome then switches to translate the ORF on the tmRNA; the nascent peptide is terminated with the 'tag peptide' encoded by the tmRNA and targeted for degradation. The ribosome is freed to recommence translation, which seems to be the essential function of trans-translation. This chain is SsrA-binding protein, found in Pseudomonas entomophila (strain L48).